The chain runs to 531 residues: RCC1 and BTB domain-containing protein 1 (531 aa).

RCC1 repeat units follow at residues 40–91 (NDEV…LLTT), 93–145 (DGVV…ALAA), 147–198 (GELF…AVLD), 199–250 (SGEV…ALTD), 252–302 (GLLY…AAKT), and 304–356 (GGHV…FLTV). BTB domains are found at residues 370 to 437 (ADLK…DLPP) and 470 to 499 (ENAF…INHL).

In the retina, mainly expressed in the inner retina with strong signals reaching up to the outer plexiform layer (at protein level).

The protein localises to the nucleus. May be involved in cell cycle regulation by chromatin remodeling. The chain is RCC1 and BTB domain-containing protein 1 (Rcbtb1) from Mus musculus (Mouse).